We begin with the raw amino-acid sequence, 556 residues long: Arginine--tRNA ligase (556 aa).

The 'HIGH' region motif lies at 133 to 143 (ANPTGPIHIGH).

The protein belongs to the class-I aminoacyl-tRNA synthetase family. Monomer.

It localises to the cytoplasm. It catalyses the reaction tRNA(Arg) + L-arginine + ATP = L-arginyl-tRNA(Arg) + AMP + diphosphate. This Dehalococcoides mccartyi (strain ATCC BAA-2100 / JCM 16839 / KCTC 5957 / BAV1) protein is Arginine--tRNA ligase.